A 137-amino-acid polypeptide reads, in one-letter code: uncharacterized protein (137 aa).

Positions 30–105 constitute a Sm domain; it reads SLLCVFTALR…IRFIQIPDKI (76 aa).

This is an uncharacterized protein from Dictyostelium discoideum (Social amoeba).